The chain runs to 278 residues: Secreted RxLR effector protein 151 (278 aa).

Residues 1 to 18 (MRNRAVLFGLFFIGYSSC) form the signal peptide. The short motif at 49–64 (RLLQVDGPKRILAEER) is the RxLR-dEER element.

It belongs to the RxLR effector family.

It localises to the secreted. The protein resides in the host endoplasmic reticulum membrane. In terms of biological role, secreted effector that completely suppresses the host cell death induced by cell death-inducing proteins. The chain is Secreted RxLR effector protein 151 from Plasmopara viticola (Downy mildew of grapevine).